Here is a 505-residue protein sequence, read N- to C-terminus: Probable cytochrome P450 28a5 (505 aa).

A heme-binding site is contributed by Cys-450.

This sequence belongs to the cytochrome P450 family. It depends on heme as a cofactor.

Its subcellular location is the endoplasmic reticulum membrane. The protein localises to the microsome membrane. In terms of biological role, may be involved in the metabolism of insect hormones and in the breakdown of synthetic insecticides. In Drosophila melanogaster (Fruit fly), this protein is Probable cytochrome P450 28a5 (Cyp28a5).